Here is a 168-residue protein sequence, read N- to C-terminus: Large ribosomal subunit protein uL10 (168 aa).

It belongs to the universal ribosomal protein uL10 family. As to quaternary structure, part of the ribosomal stalk of the 50S ribosomal subunit. The N-terminus interacts with L11 and the large rRNA to form the base of the stalk. The C-terminus forms an elongated spine to which L12 dimers bind in a sequential fashion forming a multimeric L10(L12)X complex.

Its function is as follows. Forms part of the ribosomal stalk, playing a central role in the interaction of the ribosome with GTP-bound translation factors. The chain is Large ribosomal subunit protein uL10 (rplJ) from Buchnera aphidicola subsp. Baizongia pistaciae (strain Bp).